Reading from the N-terminus, the 267-residue chain is NAD kinase 1 (267 aa).

Asp45 (proton acceptor) is an active-site residue. Residues 45–46, 122–123, Arg149, Asp151, and Ala186 contribute to the NAD(+) site; these read DG and NE.

The protein belongs to the NAD kinase family. The cofactor is a divalent metal cation.

The protein resides in the cytoplasm. It catalyses the reaction NAD(+) + ATP = ADP + NADP(+) + H(+). Involved in the regulation of the intracellular balance of NAD and NADP, and is a key enzyme in the biosynthesis of NADP. Catalyzes specifically the phosphorylation on 2'-hydroxyl of the adenosine moiety of NAD to yield NADP. In Oceanobacillus iheyensis (strain DSM 14371 / CIP 107618 / JCM 11309 / KCTC 3954 / HTE831), this protein is NAD kinase 1.